The primary structure comprises 413 residues: Putative tRNA pseudouridine synthase C16C4.06c (413 aa).

Asp-96 (nucleophile) is an active-site residue. Substrate is bound at residue Tyr-154.

It belongs to the tRNA pseudouridine synthase TruA family.

The protein resides in the cytoplasm. The protein localises to the nucleus. It carries out the reaction a uridine in tRNA = a pseudouridine in tRNA. This Schizosaccharomyces pombe (strain 972 / ATCC 24843) (Fission yeast) protein is Putative tRNA pseudouridine synthase C16C4.06c.